A 1104-amino-acid chain; its full sequence is Carbamoyl phosphate synthase large chain (1104 aa).

The tract at residues 1-403 is carboxyphosphate synthetic domain; that stretch reads MPRRQDIQKI…SFQKALRSLE (403 aa). The ATP site is built by R129, R170, G176, G177, Q209, L211, E216, G242, I243, H244, Q286, and E300. In terms of domain architecture, ATP-grasp 1 spans 133-329; it reads NEAMDKIGVK…IAKMAAKLAV (197 aa). Mg(2+) is bound by residues Q286, E300, and N302. Residues Q286, E300, and N302 each contribute to the Mn(2+) site. The interval 404 to 552 is oligomerization domain; that stretch reads TGRAGWGCDK…YSTYEEETEV (149 aa). The carbamoyl phosphate synthetic domain stretch occupies residues 553–966; it reads IPASKPKVMI…AFAKAELGAG (414 aa). Residues 703–900 enclose the ATP-grasp 2 domain; the sequence is EKILQKLNIS…LAKLASLIMS (198 aa). ATP contacts are provided by R739, K778, L780, E785, G811, I812, H813, S814, Q854, and E871. Residues Q854, E871, and N873 each coordinate Mg(2+). Positions 854, 871, and 873 each coordinate Mn(2+). Residues 967–1104 enclose the MGS-like domain; that stretch reads ERLPLTGTVF…KTIQEYCPNF (138 aa). Residues 967–1104 form an allosteric domain region; the sequence is ERLPLTGTVF…KTIQEYCPNF (138 aa).

It belongs to the CarB family. In terms of assembly, composed of two chains; the small (or glutamine) chain promotes the hydrolysis of glutamine to ammonia, which is used by the large (or ammonia) chain to synthesize carbamoyl phosphate. Tetramer of heterodimers (alpha,beta)4. Requires Mg(2+) as cofactor. Mn(2+) is required as a cofactor.

The catalysed reaction is hydrogencarbonate + L-glutamine + 2 ATP + H2O = carbamoyl phosphate + L-glutamate + 2 ADP + phosphate + 2 H(+). The enzyme catalyses hydrogencarbonate + NH4(+) + 2 ATP = carbamoyl phosphate + 2 ADP + phosphate + 2 H(+). The protein operates within amino-acid biosynthesis; L-arginine biosynthesis; carbamoyl phosphate from bicarbonate: step 1/1. Its pathway is pyrimidine metabolism; UMP biosynthesis via de novo pathway; (S)-dihydroorotate from bicarbonate: step 1/3. In terms of biological role, large subunit of the glutamine-dependent carbamoyl phosphate synthetase (CPSase). CPSase catalyzes the formation of carbamoyl phosphate from the ammonia moiety of glutamine, carbonate, and phosphate donated by ATP, constituting the first step of 2 biosynthetic pathways, one leading to arginine and/or urea and the other to pyrimidine nucleotides. The large subunit (synthetase) binds the substrates ammonia (free or transferred from glutamine from the small subunit), hydrogencarbonate and ATP and carries out an ATP-coupled ligase reaction, activating hydrogencarbonate by forming carboxy phosphate which reacts with ammonia to form carbamoyl phosphate. The sequence is that of Carbamoyl phosphate synthase large chain from Nostoc sp. (strain PCC 7120 / SAG 25.82 / UTEX 2576).